We begin with the raw amino-acid sequence, 411 residues long: Argininosuccinate synthase (411 aa).

ATP contacts are provided by residues 10–18 (AYSGGLDTS) and Ala37. 2 residues coordinate L-citrulline: Tyr89 and Ser94. An ATP-binding site is contributed by Gly119. The L-aspartate site is built by Thr121, Asn125, and Asp126. Asn125 is a binding site for L-citrulline. 5 residues coordinate L-citrulline: Arg129, Ser178, Ser187, Glu263, and Tyr275.

The protein belongs to the argininosuccinate synthase family. Type 1 subfamily. Homotetramer.

Its subcellular location is the cytoplasm. It carries out the reaction L-citrulline + L-aspartate + ATP = 2-(N(omega)-L-arginino)succinate + AMP + diphosphate + H(+). Its pathway is amino-acid biosynthesis; L-arginine biosynthesis; L-arginine from L-ornithine and carbamoyl phosphate: step 2/3. The protein is Argininosuccinate synthase of Aeromonas salmonicida (strain A449).